A 365-amino-acid chain; its full sequence is Glycosyltransferase 8 domain-containing protein 1 (365 aa).

Over 1–4 (MTVR) the chain is Cytoplasmic. Residues 5-22 (RVNVVILVLLVVAFLIVL) form a helical; Signal-anchor for type II membrane protein membrane-spanning segment. Over 23-365 (HRNLLNLNDF…HPIRKHVEEK (343 aa)) the chain is Lumenal. N-linked (GlcNAc...) asparagine glycans are attached at residues Asn102, Asn181, Asn245, and Asn253.

Belongs to the glycosyltransferase 8 family.

It localises to the membrane. The polypeptide is Glycosyltransferase 8 domain-containing protein 1 (glt8d1) (Danio rerio (Zebrafish)).